We begin with the raw amino-acid sequence, 152 residues long: MALNQLSLSLQFARDAEATAHRATLPRHAVARWIRHALAVDAEITVRIVGAEEGQRLNREFRHKDYATNVLTFDYQQEPVAVADLVLCAPVVEREAREQNKTLEEHYAHLLVHGTLHAQGWDHETSEQDAQEMEAYETAILQELGFADPYAA.

Zn(2+)-binding residues include histidine 113, histidine 117, and histidine 123.

This sequence belongs to the endoribonuclease YbeY family. Zn(2+) is required as a cofactor.

The protein localises to the cytoplasm. In terms of biological role, single strand-specific metallo-endoribonuclease involved in late-stage 70S ribosome quality control and in maturation of the 3' terminus of the 16S rRNA. The chain is Endoribonuclease YbeY from Acidovorax sp. (strain JS42).